The chain runs to 368 residues: Membrane glycoprotein UL18 (368 aa).

The signal sequence occupies residues 1–19; the sequence is MMTMWCLTLFVLWMLRVVG. A helical membrane pass occupies residues 326–346; the sequence is ISSVLLALLLCALLFAFLHYF.

In terms of assembly, interacts with host LILRB1.

The protein resides in the host membrane. Plays a role in the protection against host NK cell cytotoxicity by interacting with and modulating the activity of the host inhibitory leukocyte Ig-like receptor 1/LILRB1, which is expressed on monocytes, dendritic cells, as well as subsets of T and NK cells. UL18 exerts an inhibitory effect on LIR-1+ NK cells, while it stimulates LIR-1- NK cell. The sequence is that of Membrane glycoprotein UL18 (UL18) from Homo sapiens (Human).